The primary structure comprises 270 residues: Molybdenum storage protein subunit beta (270 aa).

As to quaternary structure, octamer consisting of 4 alpha and 4 beta chains.

It is found in the cytoplasm. In terms of biological role, intracellular storage of molybdenum. Binds polyoxomolybdates. Can bind at least 90 molybdenum atoms per protein molecule. The sequence is that of Molybdenum storage protein subunit beta from Azotobacter vinelandii (strain DJ / ATCC BAA-1303).